We begin with the raw amino-acid sequence, 836 residues long: V-type proton ATPase subunit C (836 aa).

Basic residues predominate over residues 116-144 (LSLRHQRKHQHTHHQNKPQHYHHHHHHHQ). Disordered stretches follow at residues 116-169 (LSLR…ASAP), 302-403 (APTT…SVQS), 415-453 (KPKR…QNHN), and 496-544 (PSQL…PLSP). Residues 160–169 (ATPPAPASAP) show a composition bias toward pro residues. Residues 302–316 (APTTSSSVHSSMSRS) are compositionally biased toward low complexity. Composition is skewed to polar residues over residues 319–348 (KRLN…HLAT) and 364–374 (TNPLQSPVQKS). Low complexity predominate over residues 425-450 (AQQQHETAQLQHQQTTQQHATPLTPQ). Polar residues predominate over residues 496–511 (PSQLNINNGFNLTPTH). A compositionally biased stretch (low complexity) spans 512 to 529 (RSSPVSSCCGSSSQGRSS).

This sequence belongs to the V-ATPase C subunit family. In terms of assembly, V-ATPase is a heteromultimeric enzyme made up of two complexes: the ATP-hydrolytic V1 complex and the proton translocation V0 complex. The V1 complex consists of three catalytic AB heterodimers that form a heterohexamer, three peripheral stalks each consisting of EG heterodimers, one central rotor including subunits D and F, and the regulatory subunits C and H. The proton translocation complex V0 consists of the proton transport subunit a, a ring of proteolipid subunits c9c'', rotary subunit d, subunits e and f, and the accessory subunits VhaAC45 and ATP6AP2. In terms of tissue distribution, in larvae, expressed in the ring gland, CNS, imaginal disks and lymph gland.

In terms of biological role, subunit of the V1 complex of vacuolar(H+)-ATPase (V-ATPase), a multisubunit enzyme composed of a peripheral complex (V1) that hydrolyzes ATP and a membrane integral complex (V0) that translocates protons. V-ATPase is responsible for acidifying and maintaining the pH of intracellular compartments and in some cell types, is targeted to the plasma membrane, where it is responsible for acidifying the extracellular environment. Subunit C is necessary for the assembly of the catalytic sector of the enzyme and is likely to have a specific function in its catalytic activity. In enterocytes, acts as part of a pHCl-2 sensory pathway which mediates Tor-dependent larval growth and metabolism in response to zinc availability. Likely acts in maintaining enterocyte lysosomal acidification which consequently promotes Tor activation at the lysosome membrane. In Drosophila melanogaster (Fruit fly), this protein is V-type proton ATPase subunit C (Vha44).